The chain runs to 353 residues: Photosystem II protein D1 (353 aa).

The residue at position 2 (Thr-2) is an N-acetylthreonine. The residue at position 2 (Thr-2) is a Phosphothreonine. 3 helical membrane-spanning segments follow: residues 29 to 46 (YIGW…TATS), 118 to 133 (HFLL…EWEL), and 142 to 156 (WIAV…AATA). Chlorophyll a is bound at residue His-118. Tyr-126 serves as a coordination point for pheophytin a. 2 residues coordinate [CaMn4O5] cluster: Asp-170 and Glu-189. A helical membrane pass occupies residues 197–218 (FHMLGVAGVFGSSLFSAMHGSL). His-198 serves as a coordination point for chlorophyll a. A quinone-binding positions include His-215 and 264–265 (SF). His-215 contacts Fe cation. Residue His-272 participates in Fe cation binding. The chain crosses the membrane as a helical span at residues 274–288 (FLAAWPVVGIWFTAL). Residues His-332, Glu-333, Asp-342, and Ala-344 each contribute to the [CaMn4O5] cluster site. Residues 345–353 (AMEAPSVNG) constitute a propeptide that is removed on maturation.

It belongs to the reaction center PufL/M/PsbA/D family. PSII is composed of 1 copy each of membrane proteins PsbA, PsbB, PsbC, PsbD, PsbE, PsbF, PsbH, PsbI, PsbJ, PsbK, PsbL, PsbM, PsbT, PsbX, PsbY, PsbZ, Psb30/Ycf12, at least 3 peripheral proteins of the oxygen-evolving complex and a large number of cofactors. It forms dimeric complexes. It depends on The D1/D2 heterodimer binds P680, chlorophylls that are the primary electron donor of PSII, and subsequent electron acceptors. It shares a non-heme iron and each subunit binds pheophytin, quinone, additional chlorophylls, carotenoids and lipids. D1 provides most of the ligands for the Mn4-Ca-O5 cluster of the oxygen-evolving complex (OEC). There is also a Cl(-1) ion associated with D1 and D2, which is required for oxygen evolution. The PSII complex binds additional chlorophylls, carotenoids and specific lipids. as a cofactor. Tyr-161 forms a radical intermediate that is referred to as redox-active TyrZ, YZ or Y-Z. Post-translationally, C-terminally processed by CTPA; processing is essential to allow assembly of the oxygen-evolving complex and thus photosynthetic growth.

Its subcellular location is the plastid. The protein resides in the chloroplast thylakoid membrane. It carries out the reaction 2 a plastoquinone + 4 hnu + 2 H2O = 2 a plastoquinol + O2. In terms of biological role, photosystem II (PSII) is a light-driven water:plastoquinone oxidoreductase that uses light energy to abstract electrons from H(2)O, generating O(2) and a proton gradient subsequently used for ATP formation. It consists of a core antenna complex that captures photons, and an electron transfer chain that converts photonic excitation into a charge separation. The D1/D2 (PsbA/PsbD) reaction center heterodimer binds P680, the primary electron donor of PSII as well as several subsequent electron acceptors. The chain is Photosystem II protein D1 from Vigna unguiculata (Cowpea).